The chain runs to 379 residues: tRNA (guanine(26)-N(2))-dimethyltransferase (379 aa).

Residues 1–26 (MECREITEGSTTFTAPVQDETTQFPP) form a disordered region. The region spanning 4–369 (REITEGSTTF…APLPLIEEKI (366 aa)) is the Trm1 methyltransferase domain. Polar residues predominate over residues 8–25 (EGSTTFTAPVQDETTQFP). S-adenosyl-L-methionine is bound by residues R41, R66, D82, D108, and A109. Residues C237, C240, C257, and C260 each contribute to the Zn(2+) site.

The protein belongs to the class I-like SAM-binding methyltransferase superfamily. Trm1 family.

It catalyses the reaction guanosine(26) in tRNA + 2 S-adenosyl-L-methionine = N(2)-dimethylguanosine(26) in tRNA + 2 S-adenosyl-L-homocysteine + 2 H(+). Dimethylates a single guanine residue at position 26 of a number of tRNAs using S-adenosyl-L-methionine as donor of the methyl groups. This chain is tRNA (guanine(26)-N(2))-dimethyltransferase, found in Methanocorpusculum labreanum (strain ATCC 43576 / DSM 4855 / Z).